A 326-amino-acid polypeptide reads, in one-letter code: MNWINKVTPPGLKTMMSKKDTPDDLWVKCPASGELIYRNDLEQSWYVTPAGAHLRISPRMRFRILFDDERWEPISLPQVPLDPLKFKDDKPYPARLKAAKAKILNRDIKETEDGGAPLLQEDCMVAAYGKIGGVPAVVLVQDFEFMGGSLGMAAGEAFITAAQLALARKSAFVVCTASGGARMQEGTLSLMQMPRTTLAINDLADAKLPYVVVLTDPTSGGVSASYAMLGDVHIAEPGAMIAFSGPRVIEQTIRESLPKGFQRSEFLREKGQVDIVVDRRKLKATVARVLGHLLPMSRRRDDRSTLQLTPPKTHAPKPPEPKVKPD.

The region spanning 25–308 (LWVKCPASGE…RRDDRSTLQL (284 aa)) is the CoA carboxyltransferase N-terminal domain. The tract at residues 298-326 (RRRDDRSTLQLTPPKTHAPKPPEPKVKPD) is disordered. Positions 317 to 326 (KPPEPKVKPD) are enriched in basic and acidic residues.

The protein belongs to the AccD/PCCB family. As to quaternary structure, acetyl-CoA carboxylase is a heterohexamer composed of biotin carboxyl carrier protein (AccB), biotin carboxylase (AccC) and two subunits each of ACCase subunit alpha (AccA) and ACCase subunit beta (AccD).

The protein resides in the cytoplasm. It carries out the reaction N(6)-carboxybiotinyl-L-lysyl-[protein] + acetyl-CoA = N(6)-biotinyl-L-lysyl-[protein] + malonyl-CoA. The protein operates within lipid metabolism; malonyl-CoA biosynthesis; malonyl-CoA from acetyl-CoA: step 1/1. Component of the acetyl coenzyme A carboxylase (ACC) complex. Biotin carboxylase (BC) catalyzes the carboxylation of biotin on its carrier protein (BCCP) and then the CO(2) group is transferred by the transcarboxylase to acetyl-CoA to form malonyl-CoA. This is Acetyl-coenzyme A carboxylase carboxyl transferase subunit beta from Hyphomonas neptunium (strain ATCC 15444).